Consider the following 172-residue polypeptide: RNA silencing suppressor p19 (172 aa).

The span at 1–15 (MERAIQGNDAREQAY) shows a compositional bias: basic and acidic residues. The tract at residues 1 to 38 (MERAIQGNDAREQAYGERWNGGPGGSTSPFQLPDESPS) is disordered.

Belongs to the tombusvirus protein p19 family. In terms of assembly, homodimer.

In terms of biological role, viral suppressor of RNA silencing which binds specifically to silencing RNAs (siRNAs). Acts as a molecular caliper to specifically select siRNAs based on the length of the duplex region of the RNA. The chain is RNA silencing suppressor p19 from Tomato bushy stunt virus (strain A23) (TBSV).